A 479-amino-acid chain; its full sequence is Wax ester synthase/diacylglycerol acyltransferase 2 (479 aa).

Residues 1-182 (MAIERQVTEA…VAPKKNKAKN (182 aa)) are Cytoplasmic-facing. His144 serves as the catalytic Proton acceptor. A helical transmembrane segment spans residues 183 to 199 (VCFSLVAWLWFIVRLMF). Over 200–479 (HTCVEVIKSI…PKKVFHASKV (280 aa)) the chain is Lumenal. N-linked (GlcNAc...) asparagine glycosylation is present at Asn253.

This sequence in the N-terminal section; belongs to the long-chain O-acyltransferase family. As to expression, mostly expressed in flowers and siliques and barely in roots and stems.

The protein localises to the cell membrane. Its subcellular location is the endoplasmic reticulum membrane. The catalysed reaction is an acyl-CoA + a 1,2-diacyl-sn-glycerol = a triacyl-sn-glycerol + CoA. The enzyme catalyses a long chain fatty alcohol + a fatty acyl-CoA = a wax ester + CoA. It participates in glycerolipid metabolism; triacylglycerol biosynthesis. Its pathway is lipid metabolism. In terms of biological role, bifunctional wax ester synthase/diacylglycerol acyltransferase. Involved in cuticular wax biosynthesis. This Arabidopsis thaliana (Mouse-ear cress) protein is Wax ester synthase/diacylglycerol acyltransferase 2.